We begin with the raw amino-acid sequence, 542 residues long: MFSLQELCRKNIYILPYPLGKHVLQQLGLYWKGHGSLQRIGDDHVLLQQDLIFSINEALRMAAEEGNNEVVKLLLLWEGNLHYAIIGALEGDRYDLIHKYYEQIGDCHKILPLIQDPQIFEKCHELSNSCNIRCLLEHAVKHNMLSILQKHKDQIRLHMALTQILFELACHERKNDIIRWIGYSLHIYHLETIFDVAFAHKNLSLYVLGYELLMHKVNTEAANIDLPNLLSYHLRTAAAGGLLNFMLETIKHGGCVDKTVLSAAIRYKHRKIVAHFIHQVPRKTVKKLLLYAVQARAPKKTLNLLLSSLNYAVHTITKQLVHNVINYSSTLVVKLLLMRRKRKLNLVDAVLARLVKYSTYTDIVQFMGEFSVSPERVIKMAARESRTFLIEMISKAAWGNHPQTLIHHLKHLTNTMKPQSGKDLIIYTIHYIYLNSNMLVAEEEKNIFKLAKFYANHNAVNRFKQICEDYYILDARFKTLILECFEIAVQKNYPRIANIVDDYIRFLFYRGNITEEEIREAYSLKDAEVYVDLKWLQQGEMV.

The protein belongs to the asfivirus MGF 505 family.

Functionally, plays a role in virus cell tropism, and may be required for efficient virus replication in macrophages. The protein is Protein MGF 505-10R of Ornithodoros (relapsing fever ticks).